We begin with the raw amino-acid sequence, 411 residues long: Phosphopentomutase (411 aa).

Residues Asp-14, Asp-306, His-311, Asp-347, His-348, and His-359 each contribute to the Mn(2+) site.

The protein belongs to the phosphopentomutase family. Mn(2+) serves as cofactor.

Its subcellular location is the cytoplasm. It carries out the reaction 2-deoxy-alpha-D-ribose 1-phosphate = 2-deoxy-D-ribose 5-phosphate. It catalyses the reaction alpha-D-ribose 1-phosphate = D-ribose 5-phosphate. It participates in carbohydrate degradation; 2-deoxy-D-ribose 1-phosphate degradation; D-glyceraldehyde 3-phosphate and acetaldehyde from 2-deoxy-alpha-D-ribose 1-phosphate: step 1/2. Its function is as follows. Isomerase that catalyzes the conversion of deoxy-ribose 1-phosphate (dRib-1-P) and ribose 1-phosphate (Rib-1-P) to deoxy-ribose 5-phosphate (dRib-5-P) and ribose 5-phosphate (Rib-5-P), respectively. The chain is Phosphopentomutase from Lactococcus lactis subsp. cremoris (strain SK11).